Here is a 301-residue protein sequence, read N- to C-terminus: dTDP-4-dehydrorhamnose reductase (301 aa).

NADH is bound by residues 10-12 (GQV), aspartate 30, 39-40 (DF), and 63-65 (AHT). An NADPH-binding site is contributed by 11–12 (QV). Residues 39–40 (DF), 63–65 (AHT), and tyrosine 102 contribute to the NADPH site. 104–105 (TD) is a binding site for dTDP-beta-L-rhamnose. 2 residues coordinate NADH: tyrosine 129 and lysine 133. Positions 129 and 133 each coordinate NADPH. Tyrosine 129 (proton donor/acceptor) is an active-site residue. Residue tryptophan 155 coordinates dTDP-beta-L-rhamnose.

Belongs to the dTDP-4-dehydrorhamnose reductase family. As to quaternary structure, homodimer. It depends on Mg(2+) as a cofactor.

It catalyses the reaction dTDP-beta-L-rhamnose + NADP(+) = dTDP-4-dehydro-beta-L-rhamnose + NADPH + H(+). The protein operates within carbohydrate biosynthesis; dTDP-L-rhamnose biosynthesis. It functions in the pathway bacterial outer membrane biogenesis; LPS O-antigen biosynthesis. Its function is as follows. Involved in the biosynthesis of the dTDP-L-rhamnose which is an important component of lipopolysaccharide (LPS). Catalyzes the reduction of dTDP-6-deoxy-L-lyxo-4-hexulose to yield dTDP-L-rhamnose. RmlD uses NADH and NADPH nearly equally well. This is dTDP-4-dehydrorhamnose reductase from Escherichia coli.